Reading from the N-terminus, the 416-residue chain is MSLVAIGINHKTATVDLREKVAFSPDSIHDAMKSLASRTRSGEAVILSTCNRTELYCNDAVATEVIEWLADYHDLNLQDLLACTYQHEDQAAVKHLMRVAAGLDSLVLGEPQILGQVKQAFVKAKEAGTTALTIDRLFQNTFSVAKKVRTETEIGAAAVSVAFAAVSMAKHIFSSLKATKVLLIGAGETIELVAKHLKDNGVASIVVANRTLERAQAMCQAFDATAITLQQIPDFLPKADIVISSTASPLPILGKGMVEKALKTRRHQPMLLVDIAVPRDIEAEVGELDDAFLYTVDDLHSIIEQNMASRKEAAEQAELITEDQSLLFMEWLTSLESVDSIREYRTQSLVIKDELVERALNKLAQGGDSEQVIIELANRLTNRLIHSPTQALTVASRQGDLTTLGQLRAALGLDKH.

Residues 49 to 52 (TCNR), Ser-105, 110 to 112 (EPQ), and Gln-116 contribute to the substrate site. Cys-50 acts as the Nucleophile in catalysis. Position 185-190 (185-190 (GAGETI)) interacts with NADP(+).

Belongs to the glutamyl-tRNA reductase family. As to quaternary structure, homodimer.

The enzyme catalyses (S)-4-amino-5-oxopentanoate + tRNA(Glu) + NADP(+) = L-glutamyl-tRNA(Glu) + NADPH + H(+). The protein operates within porphyrin-containing compound metabolism; protoporphyrin-IX biosynthesis; 5-aminolevulinate from L-glutamyl-tRNA(Glu): step 1/2. Functionally, catalyzes the NADPH-dependent reduction of glutamyl-tRNA(Glu) to glutamate 1-semialdehyde (GSA). The chain is Glutamyl-tRNA reductase from Shewanella denitrificans (strain OS217 / ATCC BAA-1090 / DSM 15013).